A 281-amino-acid chain; its full sequence is ATP phosphoribosyltransferase (281 aa).

It belongs to the ATP phosphoribosyltransferase family. Long subfamily. The cofactor is Mg(2+).

It localises to the cytoplasm. It catalyses the reaction 1-(5-phospho-beta-D-ribosyl)-ATP + diphosphate = 5-phospho-alpha-D-ribose 1-diphosphate + ATP. Its pathway is amino-acid biosynthesis; L-histidine biosynthesis; L-histidine from 5-phospho-alpha-D-ribose 1-diphosphate: step 1/9. Its activity is regulated as follows. Feedback inhibited by histidine. Catalyzes the condensation of ATP and 5-phosphoribose 1-diphosphate to form N'-(5'-phosphoribosyl)-ATP (PR-ATP). Has a crucial role in the pathway because the rate of histidine biosynthesis seems to be controlled primarily by regulation of HisG enzymatic activity. This is ATP phosphoribosyltransferase from Kocuria rhizophila (strain ATCC 9341 / DSM 348 / NBRC 103217 / DC2201).